The primary structure comprises 97 residues: Putative septation protein SpoVG (97 aa).

This sequence belongs to the SpoVG family.

Functionally, essential for sporulation. Interferes with or is a negative regulator of the pathway leading to asymmetric septation. The polypeptide is Putative septation protein SpoVG (Bacillus cytotoxicus (strain DSM 22905 / CIP 110041 / 391-98 / NVH 391-98)).